A 480-amino-acid chain; its full sequence is Protein nucleotidyltransferase YdiU (480 aa).

8 residues coordinate ATP: Gly-86, Gly-88, Arg-89, Lys-109, Asp-121, Gly-122, Arg-172, and Arg-179. Catalysis depends on Asp-248, which acts as the Proton acceptor. Residues Asn-249 and Asp-258 each contribute to the Mg(2+) site. Asp-258 is a binding site for ATP.

It belongs to the SELO family. Requires Mg(2+) as cofactor. Mn(2+) is required as a cofactor.

The catalysed reaction is L-seryl-[protein] + ATP = 3-O-(5'-adenylyl)-L-seryl-[protein] + diphosphate. It carries out the reaction L-threonyl-[protein] + ATP = 3-O-(5'-adenylyl)-L-threonyl-[protein] + diphosphate. It catalyses the reaction L-tyrosyl-[protein] + ATP = O-(5'-adenylyl)-L-tyrosyl-[protein] + diphosphate. The enzyme catalyses L-histidyl-[protein] + UTP = N(tele)-(5'-uridylyl)-L-histidyl-[protein] + diphosphate. The catalysed reaction is L-seryl-[protein] + UTP = O-(5'-uridylyl)-L-seryl-[protein] + diphosphate. It carries out the reaction L-tyrosyl-[protein] + UTP = O-(5'-uridylyl)-L-tyrosyl-[protein] + diphosphate. Functionally, nucleotidyltransferase involved in the post-translational modification of proteins. It can catalyze the addition of adenosine monophosphate (AMP) or uridine monophosphate (UMP) to a protein, resulting in modifications known as AMPylation and UMPylation. In Klebsiella pneumoniae subsp. pneumoniae (strain ATCC 700721 / MGH 78578), this protein is Protein nucleotidyltransferase YdiU.